A 245-amino-acid polypeptide reads, in one-letter code: 2,3-bisphosphoglycerate-dependent phosphoglycerate mutase (245 aa).

Residues 8–15 (RHGQSLWN), 21–22 (TG), arginine 60, 87–90 (ERHY), lysine 98, 114–115 (RR), and 183–184 (GN) each bind substrate. The active-site Tele-phosphohistidine intermediate is the histidine 9. The active-site Proton donor/acceptor is the glutamate 87.

Belongs to the phosphoglycerate mutase family. BPG-dependent PGAM subfamily.

It catalyses the reaction (2R)-2-phosphoglycerate = (2R)-3-phosphoglycerate. It functions in the pathway carbohydrate degradation; glycolysis; pyruvate from D-glyceraldehyde 3-phosphate: step 3/5. In terms of biological role, catalyzes the interconversion of 2-phosphoglycerate and 3-phosphoglycerate. The chain is 2,3-bisphosphoglycerate-dependent phosphoglycerate mutase from Bacillus cereus (strain AH187).